A 149-amino-acid polypeptide reads, in one-letter code: Altered inheritance of mitochondria protein 11 (149 aa).

Helical transmembrane passes span 29-48 (MMRFIGSTAVTLISCRLAIT) and 79-101 (LVLATGITVGTLSMLVSGSCWIW).

The protein belongs to the AIM11 family.

It localises to the membrane. The polypeptide is Altered inheritance of mitochondria protein 11 (AIM11) (Vanderwaltozyma polyspora (strain ATCC 22028 / DSM 70294 / BCRC 21397 / CBS 2163 / NBRC 10782 / NRRL Y-8283 / UCD 57-17) (Kluyveromyces polysporus)).